Here is a 407-residue protein sequence, read N- to C-terminus: Arrestin red cell isoform 1 (407 aa).

Belongs to the arrestin family.

The protein localises to the cytoplasm. This Oncorhynchus mykiss (Rainbow trout) protein is Arrestin red cell isoform 1.